A 134-amino-acid chain; its full sequence is uncharacterized protein (134 aa).

The protein resides in the cell membrane. In terms of biological role, may have a role in the regulation of NDH-1 biosynthesis. This is an uncharacterized protein from Paracoccus denitrificans.